Reading from the N-terminus, the 480-residue chain is Endothelial transcription factor GATA-2 (480 aa).

A Phosphoserine modification is found at Ser-73. Residue Arg-86 is modified to Asymmetric dimethylarginine. Residues 119–209 (SPFSKTPLHP…GSAARGEDKD (91 aa)) are disordered. Residues 143–153 (GAGGGSGGGSG) show a composition bias toward gly residues. Residues 185-203 (PSTTGAASPASSSAGGSAA) are compositionally biased toward low complexity. Residue Ser-192 is modified to Phosphoserine. GATA-type zinc fingers lie at residues 295-319 (CVNC…CNAC) and 349-373 (CANC…CNAC). A Glycyl lysine isopeptide (Lys-Gly) (interchain with G-Cter in SUMO2) cross-link involves residue Lys-389. Residues 448–480 (HSGHILPTPTPIHPSSSLSFGHPHPSSMVTAMG) are disordered.

Interacts with BRD3. Interacts with AR and CCAR1. Interacts with MDFIC. In terms of tissue distribution, endothelial cells.

Its subcellular location is the nucleus. Transcriptional activator which regulates endothelin-1 gene expression in endothelial cells. Binds to the consensus sequence 5'-AGATAG-3'. The sequence is that of Endothelial transcription factor GATA-2 (GATA2) from Homo sapiens (Human).